The following is a 194-amino-acid chain: Imidazoleglycerol-phosphate dehydratase (194 aa).

The protein belongs to the imidazoleglycerol-phosphate dehydratase family.

The protein localises to the cytoplasm. The enzyme catalyses D-erythro-1-(imidazol-4-yl)glycerol 3-phosphate = 3-(imidazol-4-yl)-2-oxopropyl phosphate + H2O. It functions in the pathway amino-acid biosynthesis; L-histidine biosynthesis; L-histidine from 5-phospho-alpha-D-ribose 1-diphosphate: step 6/9. In Bacillus cereus (strain AH187), this protein is Imidazoleglycerol-phosphate dehydratase.